Reading from the N-terminus, the 81-residue chain is Cytotoxin 3b (81 aa).

The signal sequence occupies residues 1-21 (MKTLLLTLVVVTIVCLDLGYT). Disulfide bonds link Cys24-Cys42, Cys35-Cys59, Cys63-Cys74, and Cys75-Cys80.

This sequence belongs to the three-finger toxin family. Short-chain subfamily. Type IA cytotoxin sub-subfamily. As to quaternary structure, monomer in solution; Homodimer and oligomer in the presence of negatively charged lipids forming a pore with a size ranging between 20 and 30 Angstroms. In terms of tissue distribution, expressed by the venom gland.

Its subcellular location is the secreted. It localises to the target cell membrane. Its function is as follows. Shows cytolytic activity on many different cells by forming pore in lipid membranes. In vivo, increases heart rate or kills the animal by cardiac arrest. In addition, it binds to heparin with high affinity, interacts with Kv channel-interacting protein 1 (KCNIP1) in a calcium-independent manner, and binds to integrin alpha-V/beta-3 (ITGAV/ITGB3) with moderate affinity. The chain is Cytotoxin 3b from Naja atra (Chinese cobra).